Reading from the N-terminus, the 41-residue chain is Large ribosomal subunit protein bL36 (41 aa).

Belongs to the bacterial ribosomal protein bL36 family.

This chain is Large ribosomal subunit protein bL36, found in Rhodopseudomonas palustris (strain TIE-1).